The sequence spans 75 residues: DNA-directed RNA polymerase subunit omega (75 aa).

It belongs to the RNA polymerase subunit omega family. In cyanobacteria the RNAP catalytic core is composed of 2 alpha, 1 beta, 1 beta', 1 gamma and 1 omega subunit. When a sigma factor is associated with the core the holoenzyme is formed, which can initiate transcription.

It carries out the reaction RNA(n) + a ribonucleoside 5'-triphosphate = RNA(n+1) + diphosphate. Its function is as follows. Promotes RNA polymerase assembly. Latches the N- and C-terminal regions of the beta' subunit thereby facilitating its interaction with the beta and alpha subunits. This Parasynechococcus marenigrum (strain WH8102) protein is DNA-directed RNA polymerase subunit omega.